Here is a 452-residue protein sequence, read N- to C-terminus: Phosphoglucosamine mutase (452 aa).

Serine 101 functions as the Phosphoserine intermediate in the catalytic mechanism. The Mg(2+) site is built by serine 101, aspartate 241, aspartate 243, and aspartate 245. Serine 101 is subject to Phosphoserine.

This sequence belongs to the phosphohexose mutase family. The cofactor is Mg(2+). Post-translationally, activated by phosphorylation.

It catalyses the reaction alpha-D-glucosamine 1-phosphate = D-glucosamine 6-phosphate. Catalyzes the conversion of glucosamine-6-phosphate to glucosamine-1-phosphate. This Lactococcus lactis subsp. lactis (strain IL1403) (Streptococcus lactis) protein is Phosphoglucosamine mutase.